A 197-amino-acid polypeptide reads, in one-letter code: Peptide deformylase (197 aa).

Positions 106 and 148 each coordinate Fe cation. Glu149 is a catalytic residue. Fe cation is bound at residue His152.

Belongs to the polypeptide deformylase family. Fe(2+) serves as cofactor.

The enzyme catalyses N-terminal N-formyl-L-methionyl-[peptide] + H2O = N-terminal L-methionyl-[peptide] + formate. Its function is as follows. Removes the formyl group from the N-terminal Met of newly synthesized proteins. Requires at least a dipeptide for an efficient rate of reaction. N-terminal L-methionine is a prerequisite for activity but the enzyme has broad specificity at other positions. The polypeptide is Peptide deformylase (Mycobacterium tuberculosis (strain ATCC 25177 / H37Ra)).